The sequence spans 56 residues: Chymotrypsin inhibitor (56 aa).

Disulfide bonds link Cys3/Cys36, Cys12/Cys32, Cys16/Cys28, Cys20/Cys56, and Cys38/Cys50. In terms of domain architecture, TIL spans 3–56 (CGPNEVFNTCGSACAPTCAQPKTRICTMQCRIGCQCQEGFLRNGEGACVLPENC).

This sequence belongs to the serine protease inhibitor-like (TIL domain-containing) family.

It localises to the secreted. Functionally, chymotrypsin and cathepsin G inhibitor. The chain is Chymotrypsin inhibitor from Apis mellifera (Honeybee).